The sequence spans 337 residues: Protein BIG GRAIN 1-like (337 aa).

Disordered stretches follow at residues 1-32 (MRDMEMRWAAPAPATRGRGRARRRAPDQPSFS), 120-163 (SAAG…RPAS), and 179-233 (KRPS…ARPS). A compositionally biased stretch (basic and acidic residues) spans 137–146 (HEQPDVEKTA). Low complexity-rich tracts occupy residues 150 to 163 (PGSASARACRRPAS), 195 to 209 (PACSTAPPSSSSSYA), and 219 to 230 (RTPPTTTTTARA).

The protein belongs to the BIG GRAIN 1 (BG1) plant protein family.

It localises to the cell membrane. In terms of biological role, involved in auxin transport. Regulator of the auxin signaling pathway. The polypeptide is Protein BIG GRAIN 1-like (Oryza sativa subsp. indica (Rice)).